Reading from the N-terminus, the 845-residue chain is Ribonucleoside-diphosphate reductase subunit alpha (845 aa).

Positions 1-98 constitute an ATP-cone domain; that stretch reads MHIIKRNGEP…LYRDDRTKKR (98 aa). Substrate contacts are provided by residues Thr303, 318–319, Gly347, 534–538, and 725–729; these read SC, NLCTE, and PTSST. An intrachain disulfide couples Cys319 to Cys574. The Proton acceptor role is filled by Asn534. The active-site Cysteine radical intermediate is the Cys536. Glu538 acts as the Proton acceptor in catalysis.

It belongs to the ribonucleoside diphosphate reductase large chain family. In terms of assembly, tetramer of two alpha and two beta subunits.

The catalysed reaction is a 2'-deoxyribonucleoside 5'-diphosphate + [thioredoxin]-disulfide + H2O = a ribonucleoside 5'-diphosphate + [thioredoxin]-dithiol. Under complex allosteric control mediated by deoxynucleoside triphosphates and ATP binding. The type of nucleotide bound at the specificity site determines substrate preference. It seems probable that ATP makes the enzyme reduce CDP and UDP, dGTP favors ADP reduction and dTTP favors GDP reduction. Functionally, provides the precursors necessary for DNA synthesis. Catalyzes the biosynthesis of deoxyribonucleotides from the corresponding ribonucleotides. The protein is Ribonucleoside-diphosphate reductase subunit alpha (nrdA) of Treponema pallidum (strain Nichols).